Here is a 506-residue protein sequence, read N- to C-terminus: Maturase K (506 aa).

Belongs to the intron maturase 2 family. MatK subfamily.

Its subcellular location is the plastid. The protein localises to the chloroplast. Its function is as follows. Usually encoded in the trnK tRNA gene intron. Probably assists in splicing its own and other chloroplast group II introns. This chain is Maturase K, found in Angiopteris evecta (Mule's foot fern).